A 385-amino-acid chain; its full sequence is MVGISGRAGPSGSYNYSGHTDNPEPVSGRARDSNSEANSSNSPQVPPPLNAPASPMPAGRPRFLRSMALSSQTREWLEKGMPTEAEAGVPIRLQERAANTAPQARAEERHTQPADAAAPHARAERGRTLQAPASTSPLYTGAVPRANRIVQQLVEAGADLANIRTMFRNMLRGEEMILSRAEQNVFLQHFPDMLPCGIDRNSELAIALREALRRADSQQAARAPARTPPRSSVRTPERSPAPRTATESSSGSNQRSLLGRFAGLMTSNQRRPSSASNASTSQRPVDRNPPRINLMPTGANRVAMRNRGNNEADAALQALAQNGINMEDLRAALEAYIVWLRPIPLDIANALEGVGITPRFDNPEEAKVDNPLMNLSSALKRRLDA.

3 disordered regions span residues 1–61 (MVGI…AGRP), 73–139 (TREW…SPLY), and 215–293 (ADSQ…PRIN). A host recognition region spans residues 1–333 (MVGISGRAGP…INMEDLRAAL (333 aa)). Over residues 217 to 234 (SQQAARAPARTPPRSSVR) the composition is skewed to low complexity. Composition is skewed to polar residues over residues 245 to 256 (ATESSSGSNQRS) and 265 to 283 (MTSN…TSQR).

The protein belongs to the HopAB family. In terms of assembly, interacts physically with plant cell Pto.

The protein localises to the secreted. Its function is as follows. Effector protein involved in gene-for-gene resistance in tomato plants. It is recognized by the host Pto resistance protein and elicits Pto and Prf-dependent hypersensitive response (HR) and programmed cell death (PCD), resulting in host immunity. In susceptible plants, promotes virulence, in part, by enhancing the development of disease symptoms and bacterial growth. This is Effector protein hopAB3 (hopAB3) from Pseudomonas syringae pv. maculicola.